Consider the following 440-residue polypeptide: Xylose isomerase (440 aa).

Catalysis depends on residues H101 and D104. 7 residues coordinate Mg(2+): E232, E268, H271, D296, D307, D309, and D339.

The protein belongs to the xylose isomerase family. As to quaternary structure, homotetramer. Mg(2+) is required as a cofactor.

It localises to the cytoplasm. The catalysed reaction is alpha-D-xylose = alpha-D-xylulofuranose. In Escherichia coli (strain SE11), this protein is Xylose isomerase.